We begin with the raw amino-acid sequence, 235 residues long: Protein FAM3B (235 aa).

An N-terminal signal peptide occupies residues 1-29 (MRPLAGGLLKVVFVVFASLCAWYSGYLLA). 2 cysteine pairs are disulfide-bonded: Cys-63/Cys-91 and Cys-69/Cys-229. The GG-type lectin domain maps to 72–233 (DTYAYRLLSG…IQIEGCIPKE (162 aa)). Asn-120 and Asn-208 each carry an N-linked (GlcNAc...) asparagine glycan.

It belongs to the FAM3 family. 2 N-termini have been observed in the mature protein: the first at Glu-30, resulting from signal peptide cleavage, the second at Ser-46. In terms of processing, O-glycosylated. As to expression, highly expressed in the pancreas. Also found in the colon, kidney, prostate, small intestine and testis.

It localises to the secreted. In terms of biological role, induces apoptosis of alpha and beta cells in a dose- and time-dependent manner. This Homo sapiens (Human) protein is Protein FAM3B (FAM3B).